The chain runs to 410 residues: Lissencephaly-1 homolog (410 aa).

A LisH domain is found at 7–39 (QRDELNRAIADYLRSNGYEEAYSVFKKEAELDM). Positions 56 to 82 (TSVIRLQKKVMELESKLNEAKEEFTSG) form a coiled coil. 7 WD repeats span residues 106–147 (GHRS…RTLK), 148–189 (GHTD…RTMH), 190–229 (GHDH…CVKT), 232–271 (GHRE…CKAE), 274–333 (EHEH…CLMT), 336–377 (GHDN…KTLN), and 379–410 (HEHF…WECR).

This sequence belongs to the WD repeat LIS1/nudF family. Can self-associate. Component of the cytosolic PAF-AH (I) heterotetrameric enzyme, which is composed of PAFAH1B1 (beta), PAFAH1B2 (alpha2) and PAFAH1B3 (alpha1) subunits. The catalytic activity of the enzyme resides in the alpha1 (PAFAH1B3) and alpha2 (PAFAH1B2) subunits, whereas the beta subunit (PAFAH1B1) has regulatory activity. Trimer formation is not essential for the catalytic activity. Interacts with dynein, dynactin, nde1 and ndel1.

The protein localises to the cytoplasm. Its subcellular location is the cytoskeleton. It localises to the microtubule organizing center. The protein resides in the centrosome. Functionally, regulatory subunit (beta subunit) of the cytosolic type I platelet-activating factor (PAF) acetylhydrolase (PAF-AH (I)), an enzyme that catalyzes the hydrolyze of the acetyl group at the sn-2 position of PAF and its analogs and participates in PAF inactivation. Regulates the PAF-AH (I) activity in a catalytic dimer composition-dependent manner. Positively regulates the activity of the minus-end directed microtubule motor protein dynein. May enhance dynein-mediated microtubule sliding by targeting dynein to the microtubule plus end. Required for several dynein- and microtubule-dependent processes such as the maintenance of Golgi integrity, the peripheral transport of microtubule fragments and the coupling of the nucleus and centrosome. May be required for proliferation of neuronal precursors and neuronal migration. In Xenopus laevis (African clawed frog), this protein is Lissencephaly-1 homolog (pafah1b1).